The chain runs to 546 residues: Delta-1-pyrroline-5-carboxylate dehydrogenase (546 aa).

279–284 (KDISSN) is an NAD(+) binding site. The active-site Proton acceptor is Glu297. The active-site Nucleophile is the Cys331.

This sequence belongs to the aldehyde dehydrogenase family.

Its subcellular location is the cytoplasm. It catalyses the reaction L-glutamate 5-semialdehyde + NAD(+) + H2O = L-glutamate + NADH + 2 H(+). Its pathway is amino-acid degradation; L-proline degradation into L-glutamate; L-glutamate from L-proline: step 2/2. The sequence is that of Delta-1-pyrroline-5-carboxylate dehydrogenase (pruA) from Agaricus bisporus (White button mushroom).